Here is a 75-residue protein sequence, read N- to C-terminus: Endogenous retrovirus group K member 10 Np9 protein (75 aa).

The segment at 21-43 (PTAPKRQRPSRTGHDDDGGFVEK) is disordered. Residues 32–43 (TGHDDDGGFVEK) are compositionally biased toward basic and acidic residues.

Its subcellular location is the nucleus. In terms of biological role, may possess a function in tumorigenesis. This Homo sapiens (Human) protein is Endogenous retrovirus group K member 10 Np9 protein (ERVK-10).